Reading from the N-terminus, the 229-residue chain is Cytochrome c oxidase subunit 2 (229 aa).

At Met-1–His-26 the chain is on the mitochondrial intermembrane side. The chain crosses the membrane as a helical span at residues Ala-27–Asn-48. Residues Ser-49–Glu-62 are Mitochondrial matrix-facing. The chain crosses the membrane as a helical span at residues Met-63 to Arg-82. Topologically, residues Leu-83–Ser-229 are mitochondrial intermembrane. Positions 161, 196, 198, 200, 204, and 207 each coordinate Cu cation. A Mg(2+)-binding site is contributed by Glu-198.

Belongs to the cytochrome c oxidase subunit 2 family. As to quaternary structure, component of the cytochrome c oxidase (complex IV, CIV), a multisubunit enzyme composed of a catalytic core of 3 subunits and several supernumerary subunits. The complex exists as a monomer or a dimer and forms supercomplexes (SCs) in the inner mitochondrial membrane with ubiquinol-cytochrome c oxidoreductase (cytochrome b-c1 complex, complex III, CIII). Requires Cu cation as cofactor.

The protein localises to the mitochondrion inner membrane. The enzyme catalyses 4 Fe(II)-[cytochrome c] + O2 + 8 H(+)(in) = 4 Fe(III)-[cytochrome c] + 2 H2O + 4 H(+)(out). Functionally, component of the cytochrome c oxidase, the last enzyme in the mitochondrial electron transport chain which drives oxidative phosphorylation. The respiratory chain contains 3 multisubunit complexes succinate dehydrogenase (complex II, CII), ubiquinol-cytochrome c oxidoreductase (cytochrome b-c1 complex, complex III, CIII) and cytochrome c oxidase (complex IV, CIV), that cooperate to transfer electrons derived from NADH and succinate to molecular oxygen, creating an electrochemical gradient over the inner membrane that drives transmembrane transport and the ATP synthase. Cytochrome c oxidase is the component of the respiratory chain that catalyzes the reduction of oxygen to water. Electrons originating from reduced cytochrome c in the intermembrane space (IMS) are transferred via the dinuclear copper A center (CU(A)) of subunit 2 and heme A of subunit 1 to the active site in subunit 1, a binuclear center (BNC) formed by heme A3 and copper B (CU(B)). The BNC reduces molecular oxygen to 2 water molecules using 4 electrons from cytochrome c in the IMS and 4 protons from the mitochondrial matrix. The sequence is that of Cytochrome c oxidase subunit 2 (mt:CoII) from Drosophila miranda (Fruit fly).